The sequence spans 427 residues: 3-phosphoshikimate 1-carboxyvinyltransferase (427 aa).

Residues K20, S21, and R25 each contribute to the 3-phosphoshikimate site. K20 contacts phosphoenolpyruvate. 2 residues coordinate phosphoenolpyruvate: G92 and R120. 3-phosphoshikimate is bound by residues S166, Q168, D312, and K339. Position 168 (Q168) interacts with phosphoenolpyruvate. The active-site Proton acceptor is D312. Phosphoenolpyruvate contacts are provided by R343 and R385.

This sequence belongs to the EPSP synthase family. Monomer.

Its subcellular location is the cytoplasm. The catalysed reaction is 3-phosphoshikimate + phosphoenolpyruvate = 5-O-(1-carboxyvinyl)-3-phosphoshikimate + phosphate. It participates in metabolic intermediate biosynthesis; chorismate biosynthesis; chorismate from D-erythrose 4-phosphate and phosphoenolpyruvate: step 6/7. Catalyzes the transfer of the enolpyruvyl moiety of phosphoenolpyruvate (PEP) to the 5-hydroxyl of shikimate-3-phosphate (S3P) to produce enolpyruvyl shikimate-3-phosphate and inorganic phosphate. The chain is 3-phosphoshikimate 1-carboxyvinyltransferase from Streptococcus thermophilus (strain ATCC BAA-250 / LMG 18311).